The sequence spans 184 residues: UPF0301 protein ABSDF3201 (184 aa).

This sequence belongs to the UPF0301 (AlgH) family.

This chain is UPF0301 protein ABSDF3201, found in Acinetobacter baumannii (strain SDF).